Here is a 410-residue protein sequence, read N- to C-terminus: Histidine--tRNA ligase (410 aa).

This sequence belongs to the class-II aminoacyl-tRNA synthetase family. In terms of assembly, homodimer.

It is found in the cytoplasm. It catalyses the reaction tRNA(His) + L-histidine + ATP = L-histidyl-tRNA(His) + AMP + diphosphate + H(+). This Elusimicrobium minutum (strain Pei191) protein is Histidine--tRNA ligase.